Reading from the N-terminus, the 343-residue chain is Glyceraldehyde-3-phosphate dehydrogenase (343 aa).

NAD(+) is bound by residues 12–13 and Gly-114; that span reads SI. Residue 143 to 145 participates in D-glyceraldehyde 3-phosphate binding; it reads SCN. Catalysis depends on Cys-144, which acts as the Nucleophile. NAD(+) is bound at residue Arg-172. 198–199 contacts D-glyceraldehyde 3-phosphate; it reads HG. Gln-307 provides a ligand contact to NAD(+).

The protein belongs to the glyceraldehyde-3-phosphate dehydrogenase family. In terms of assembly, homotetramer.

The protein resides in the cytoplasm. The catalysed reaction is D-glyceraldehyde 3-phosphate + phosphate + NADP(+) = (2R)-3-phospho-glyceroyl phosphate + NADPH + H(+). It carries out the reaction D-glyceraldehyde 3-phosphate + phosphate + NAD(+) = (2R)-3-phospho-glyceroyl phosphate + NADH + H(+). It participates in carbohydrate degradation; glycolysis; pyruvate from D-glyceraldehyde 3-phosphate: step 1/5. The sequence is that of Glyceraldehyde-3-phosphate dehydrogenase (gap) from Methanocaldococcus jannaschii (strain ATCC 43067 / DSM 2661 / JAL-1 / JCM 10045 / NBRC 100440) (Methanococcus jannaschii).